Reading from the N-terminus, the 467-residue chain is UDP-glycosyltransferase 90A2 (467 aa).

UDP-alpha-D-glucose is bound by residues Ser-289, 341–343 (VDQ), 358–366 (HCGWNSLTE), and 380–383 (AAEQ).

It belongs to the UDP-glycosyltransferase family.

This Arabidopsis thaliana (Mouse-ear cress) protein is UDP-glycosyltransferase 90A2 (UGT90A2).